Here is a 174-residue protein sequence, read N- to C-terminus: DNA endonuclease I-HmuI (174 aa).

The chain is DNA endonuclease I-HmuI from Bacillus subtilis (Bacteriophage SP01).